Here is a 320-residue protein sequence, read N- to C-terminus: Fe-S cluster assembly protein dre2 (320 aa).

Residues 1–130 are N-terminal SAM-like domain; sequence MAKQTLLLSP…KPDIEEMQAV (130 aa). Positions 131–213 are linker; it reads PLRLGRKNDH…DNLLDDSELS (83 aa). The segment at 141-166 is disordered; the sequence is LAGAPSLEGSAAEHPFPPEVSEGKTA. Positions 222, 233, 236, and 238 each coordinate [2Fe-2S] cluster. Residues 222–238 form a fe-S binding site A region; the sequence is CRPKAGKRRRACKDCTC. [4Fe-4S] cluster is bound by residues Cys-283, Cys-286, Cys-294, and Cys-297. Short sequence motifs (cx2C motif) lie at residues 283-286 and 294-297; these read CGNC and CEGC. The fe-S binding site B stretch occupies residues 283-297; sequence CGNCSLGDAFRCEGC.

It belongs to the anamorsin family. As to quaternary structure, monomer. Interacts with tah18. Interacts with mia40. The cofactor is [2Fe-2S] cluster. It depends on [4Fe-4S] cluster as a cofactor.

The protein resides in the cytoplasm. Its subcellular location is the mitochondrion intermembrane space. In terms of biological role, component of the cytosolic iron-sulfur (Fe-S) protein assembly (CIA) machinery required for the maturation of extramitochondrial Fe-S proteins. Part of an electron transfer chain functioning in an early step of cytosolic Fe-S biogenesis, facilitating the de novo assembly of a [4Fe-4S] cluster on the scaffold complex cfd1-nbp35. Electrons are transferred to dre2 from NADPH via the FAD- and FMN-containing protein tah18. Tah18-dre2 are also required for the assembly of the diferric tyrosyl radical cofactor of ribonucleotide reductase (RNR), probably by providing electrons for reduction during radical cofactor maturation in the catalytic small subunit rnr2. In Neosartorya fischeri (strain ATCC 1020 / DSM 3700 / CBS 544.65 / FGSC A1164 / JCM 1740 / NRRL 181 / WB 181) (Aspergillus fischerianus), this protein is Fe-S cluster assembly protein dre2.